Reading from the N-terminus, the 144-residue chain is Large ribosomal subunit protein uL15 (144 aa).

The disordered stretch occupies residues 1 to 54; it reads MHLNTLKPAEGAKKLAKRKGRGQGSGNGKMAGRGHKGQKSRSGGMPKIGFEGGQ. Over residues 22-31 the composition is skewed to gly residues; the sequence is GQGSGNGKMA.

It belongs to the universal ribosomal protein uL15 family. Part of the 50S ribosomal subunit.

Binds to the 23S rRNA. The sequence is that of Large ribosomal subunit protein uL15 from Hydrogenovibrio crunogenus (strain DSM 25203 / XCL-2) (Thiomicrospira crunogena).